A 180-amino-acid chain; its full sequence is MKQLLEFIPLILFFVVYKLAGIREAAIALIIATIFQMLILKLKYGKIEKQQIIMGIAVVFFGTLTAYFNKVEYLQWKVTIVYALFALILLISQYGFKKPLIEKLLGKEIQLPEKIWNKLNLAWAGFFILCMLINIYISQYCSEEVWVDFKSFGIIAMTFIATLFTGIYVYRYLPKDDQNK.

5 helical membrane passes run 11 to 31, 52 to 72, 76 to 96, 121 to 141, and 149 to 169; these read ILFF…ALII, IIMG…NKVE, WKVT…QYGF, LAWA…SQYC, and FKSF…GIYV.

This sequence belongs to the YciB family.

The protein resides in the cell inner membrane. Functionally, plays a role in cell envelope biogenesis, maintenance of cell envelope integrity and membrane homeostasis. This Mannheimia succiniciproducens (strain KCTC 0769BP / MBEL55E) protein is Inner membrane-spanning protein YciB.